The sequence spans 207 residues: Large ribosomal subunit protein bL25 (207 aa).

Residues 171–207 are disordered; it reads EEETVVTVSAPRAEEEPTTTEAPEPEAVHGKDEEPVE. Positions 196-207 are enriched in basic and acidic residues; that stretch reads EAVHGKDEEPVE.

The protein belongs to the bacterial ribosomal protein bL25 family. CTC subfamily. As to quaternary structure, part of the 50S ribosomal subunit; part of the 5S rRNA/L5/L18/L25 subcomplex. Contacts the 5S rRNA. Binds to the 5S rRNA independently of L5 and L18.

Functionally, this is one of the proteins that binds to the 5S RNA in the ribosome where it forms part of the central protuberance. This Listeria monocytogenes serotype 4b (strain F2365) protein is Large ribosomal subunit protein bL25.